A 255-amino-acid chain; its full sequence is Small ribosomal subunit protein uS2 (255 aa).

The interval 233-255 (DFVAEEAASEESLEELAEIVEGK) is disordered.

Belongs to the universal ribosomal protein uS2 family.

This Lactococcus lactis subsp. lactis (strain IL1403) (Streptococcus lactis) protein is Small ribosomal subunit protein uS2 (rpsB).